The chain runs to 114 residues: uncharacterized protein (114 aa).

Residues 1–114 form a disordered region; it reads MSTAASSRMR…HASQSPDTAY (114 aa). Residues 32–43 are compositionally biased toward low complexity; sequence CRRVPSRPCRPV.

This is an uncharacterized protein from Human adenovirus B serotype 7 (HAdV-7).